Consider the following 193-residue polypeptide: Acyl-homoserine-lactone synthase (193 aa).

The protein belongs to the autoinducer synthase family.

It carries out the reaction a fatty acyl-[ACP] + S-adenosyl-L-methionine = an N-acyl-L-homoserine lactone + S-methyl-5'-thioadenosine + holo-[ACP] + H(+). Its function is as follows. Required for the synthesis of N-(3-oxodecanoyl)-L-homoserine lactone (ODHL), an autoinducer molecule which binds to VanR. The chain is Acyl-homoserine-lactone synthase (vanI) from Vibrio anguillarum (Listonella anguillarum).